The chain runs to 125 residues: Secreted RxLR effector protein 22 (125 aa).

Residues methionine 1–glycine 26 form the signal peptide. The disordered stretch occupies residues serine 21–threonine 66. Positions arginine 32–arginine 50 match the RxLR-dEER motif.

It belongs to the RxLR effector family.

It localises to the secreted. The protein resides in the host nucleus. Its function is as follows. Effector that acts as a broad suppressor of cell death to interrupt plant immunity. Inhibits cell death induced by cell death-inducing proteins, including the PAMP elicitor INF1 from P.infestans. The polypeptide is Secreted RxLR effector protein 22 (Plasmopara viticola (Downy mildew of grapevine)).